A 157-amino-acid polypeptide reads, in one-letter code: uncharacterized protein (157 aa).

A run of 4 helical transmembrane segments spans residues 3 to 23 (IFSF…MFIS), 24 to 44 (AFLS…ALAV), 47 to 67 (LMLG…ATAG), and 105 to 125 (IALL…IAGW).

To E.coli YqaA.

Its subcellular location is the cell membrane. This is an uncharacterized protein from Haemophilus influenzae (strain ATCC 51907 / DSM 11121 / KW20 / Rd).